The sequence spans 1058 residues: Ubiquitin-like modifier-activating enzyme 1 (1058 aa).

Residues 1–46 (MSSSPLSKKRRVSGPDPKPGSNCSSAQSVLSEVSSVPTNGMAKNGS) form a disordered region. Residue Ser-2 is modified to N-acetylserine. A phosphoserine mark is found at Ser-4, Ser-13, Ser-21, Ser-24, and Ser-46. Residues 24–36 (SSAQSVLSEVSSV) are compositionally biased toward low complexity. Tyr-55 is modified (phosphotyrosine). 2 tandem repeats follow at residues 63 to 199 (GHEA…GQLF) and 459 to 611 (GSDL…QVVI). Residues 63 to 611 (GHEAMKMLQT…GTKGNVQVVI (549 aa)) form a 2 approximate repeats region. ATP is bound by residues Ala-478, Asp-504, Arg-515, Lys-528, and 576–577 (DN). Lys-528 carries the post-translational modification N6-succinyllysine. Cys-632 functions as the Glycyl thioester intermediate in the catalytic mechanism. An N6-acetyllysine modification is found at Lys-671. A Phosphothreonine modification is found at Thr-800. Ser-810, Ser-816, Ser-820, and Ser-835 each carry phosphoserine. The residue at position 980 (Lys-980) is an N6-acetyllysine.

This sequence belongs to the ubiquitin-activating E1 family. In terms of assembly, monomer. Interacts with GAN (via BTB domain). Post-translationally, ISGylated.

It localises to the cytoplasm. Its subcellular location is the mitochondrion. The protein localises to the nucleus. The catalysed reaction is ATP + ubiquitin + [E1 ubiquitin-activating enzyme]-L-cysteine = AMP + diphosphate + S-ubiquitinyl-[E1 ubiquitin-activating enzyme]-L-cysteine.. It participates in protein modification; protein ubiquitination. Functionally, catalyzes the first step in ubiquitin conjugation to mark cellular proteins for degradation through the ubiquitin-proteasome system. Activates ubiquitin by first adenylating its C-terminal glycine residue with ATP, and thereafter linking this residue to the side chain of a cysteine residue in E1, yielding a ubiquitin-E1 thioester and free AMP. Essential for the formation of radiation-induced foci, timely DNA repair and for response to replication stress. Promotes the recruitment of TP53BP1 and BRCA1 at DNA damage sites. The sequence is that of Ubiquitin-like modifier-activating enzyme 1 from Rattus norvegicus (Rat).